The primary structure comprises 757 residues: MDVNPTLLFLKVPVQNAISTTFPYTGDPPYSHGTGTGYTMDTVNRTHQYSEKGKWTTNTETGAPQLNPIDGPLPEDNEPSGYAQTDCVLEAMAFLENSHPGIFENSCLETMEIVQQTRVDKLTQGRQTYDWTLNRNQPAATALANTIEIFRSNGLTANESGRLIDFLKDVMESMDKEEMEITTHFHRKRRVRDNMTKKMVTQRTIGKKKQRLNKKSYLIRALTLNTMTKDAERGKLKRRAIATPGMQIRGFVYFVETLARSICEKLEQSGLPVGGNEKKAKLANVVRKMMTNSQDTELSFTITGDNTKWNENQNPRMFLAMITYITRNQPEWFRNVLSIAPIMFSNKMARLGKGYMFESKSMKLRTQIPAEMLANIDLKYFNELTKKKIEKIRPLLIDGTASLSPGMMMGMFNMLSTVLGVSILNLGQKRYTKTTYWWDGLQSSDDFALIVNAPNHEGIQAGVDRFYRTCKLVGINMSKKKSYINRTGTFEFTSFFYRYGFVANFSMELPSFGVSGINESADMSIGVTVIKNNMINNDLGPATAQMALQLFIKDYRYTYRCHRGDTQIQTRRSFELKKLWEQTRSKAGLLVSDGGPNLYNIRNLHIPEVCLKWELMDEDYQGRLCNPLNPFVSHKEIESVNNAVVMPAHGPAKSMEYDAVATTHSWIPKRNRSILNTSQRGILEDEQMYQKCCNLFEKFFPSSSYRRPVGISSMVEAMVSRARIDARIDFESGRIKKEEFAEIMKICSTIEELRRQK.

A disordered region spans residues 52–82 (KGKWTTNTETGAPQLNPIDGPLPEDNEPSGY). Over residues 55 to 64 (WTTNTETGAP) the composition is skewed to polar residues. Short sequence motifs (nuclear localization signal) lie at residues 187-195 (RKRRVRDNM) and 203-216 (RTIGKKKQRLNKKS). The segment at 249 to 256 (RGFVYFVE) is promoter-binding site. The RdRp catalytic domain maps to 286 to 483 (VRKMMTNSQD…GINMSKKKSY (198 aa)).

It belongs to the influenza viruses polymerase PB1 family. Influenza RNA polymerase is composed of three subunits: PB1, PB2 and PA. Interacts (via N-terminus) with PA (via C-terminus). Interacts (via C-terminus) with PB2 (via N-terminus); this interaction is essential for transcription initiation. Phosphorylated by host PRKCA.

The protein localises to the host nucleus. The protein resides in the host cytoplasm. The catalysed reaction is RNA(n) + a ribonucleoside 5'-triphosphate = RNA(n+1) + diphosphate. RNA-dependent RNA polymerase which is responsible for replication and transcription of virus RNA segments. The transcription of viral mRNAs occurs by a unique mechanism called cap-snatching. 5' methylated caps of cellular mRNAs are cleaved after 10-13 nucleotides by PA. In turn, these short capped RNAs are used as primers by PB1 for transcription of viral mRNAs. During virus replication, PB1 initiates RNA synthesis and copy vRNA into complementary RNA (cRNA) which in turn serves as a template for the production of more vRNAs. The polypeptide is RNA-directed RNA polymerase catalytic subunit (Aves (Cat)).